Consider the following 414-residue polypeptide: Testis-specific Y-encoded-like protein 4 (414 aa).

Disordered regions lie at residues 1 to 129 (MSGL…AGQK) and 391 to 414 (PRRG…FQSG). Residues 24–40 (ASGDPDRDQCQGLREET) show a composition bias toward basic and acidic residues. Low complexity predominate over residues 101–112 (EAASAAEAADSS).

Belongs to the nucleosome assembly protein (NAP) family.

The polypeptide is Testis-specific Y-encoded-like protein 4 (TSPYL4) (Homo sapiens (Human)).